The chain runs to 165 residues: Phosphopantetheine adenylyltransferase (165 aa).

Ser10 contacts substrate. Residues 10–11 (SF) and His18 contribute to the ATP site. Positions 42, 79, and 93 each coordinate substrate. Residues 94–96 (GLR), Glu104, and 129–135 (VRPITAT) contribute to the ATP site.

Belongs to the bacterial CoaD family. Homohexamer. It depends on Mg(2+) as a cofactor.

The protein resides in the cytoplasm. It carries out the reaction (R)-4'-phosphopantetheine + ATP + H(+) = 3'-dephospho-CoA + diphosphate. The protein operates within cofactor biosynthesis; coenzyme A biosynthesis; CoA from (R)-pantothenate: step 4/5. Reversibly transfers an adenylyl group from ATP to 4'-phosphopantetheine, yielding dephospho-CoA (dPCoA) and pyrophosphate. In Nitrobacter hamburgensis (strain DSM 10229 / NCIMB 13809 / X14), this protein is Phosphopantetheine adenylyltransferase.